Consider the following 145-residue polypeptide: Putative pre-16S rRNA nuclease (145 aa).

It belongs to the YqgF nuclease family.

It is found in the cytoplasm. Its function is as follows. Could be a nuclease involved in processing of the 5'-end of pre-16S rRNA. This is Putative pre-16S rRNA nuclease from Microcystis aeruginosa (strain NIES-843 / IAM M-2473).